We begin with the raw amino-acid sequence, 1038 residues long: Activated CDC42 kinase 1 (1038 aa).

The segment at 1–110 (MQPEEGTGWL…TSPAPGGPAG (110 aa)) is SAM-like domain. Positions 90–114 (PPHHSQSTFRKTSPAPGGPAGEGPL) are disordered. The 260-residue stretch at 126–385 (LRLLEKLGDG…PTFVALRDFL (260 aa)) folds into the Protein kinase domain. Residues 132 to 140 (LGDGSFGVV) and Lys-158 contribute to the ATP site. Asp-252 serves as the catalytic Proton acceptor. Tyr-284 carries the post-translational modification Phosphotyrosine; by SRC and autocatalysis. One can recognise an SH3 domain in the interval 388 to 448 (AQPTDMRALQ…PRNVVTSVAG (61 aa)). The 13-residue stretch at 454 to 466 (ISQPLQNSFIHTG) folds into the CRIB domain. The tract at residues 497–535 (LSVELSTSRPPQHLGGVKKPTYDPVSEDQDPLSSDFKRL) is disordered. Tyr-518 carries the phosphotyrosine modification. The required for interaction with SRC stretch occupies residues 623-652 (DWDARPLPPPPAYDDVAQDEDDFEICSINS). The interval 632–635 (PPAY) is required for interaction with NEDD4. Disordered regions lie at residues 659 to 702 (VPAG…SSAQ) and 718 to 840 (LQAP…GPRA). Ser-724 carries the phosphoserine modification. An EBD domain region spans residues 733-876 (GDDKPQVPPR…SYLERYQRFL (144 aa)). Pro residues-rich tracts occupy residues 738-749 (QVPPRVPIPPRP), 772-783 (PASPPRVPPREP), and 794-805 (PLVPPGSSPLPP). Residue Tyr-827 is modified to Phosphotyrosine. Omega-N-methylarginine is present on Arg-839. Phosphotyrosine is present on residues Tyr-859 and Tyr-872. Phosphoserine is present on Ser-881. A disordered region spans residues 917-957 (LDPKANFSTNNSNPGARPPPPRATARLPQRGCPGDGPEAGR). The 39-residue stretch at 958–996 (PADKIQMAMVHGVTTEECQAALQCHGWSVQRAAQYLKVE) folds into the UBA domain.

Belongs to the protein kinase superfamily. Tyr protein kinase family. In terms of assembly, interacts with NEDD4 (via WW3 domain). NEDD4L and EGF promote association with NEDD4. Homodimer. Interacts with AR, CDC42, WWASL and WWOX. Interacts with CSPG4 (activated). Interacts with MERTK (activated); stimulates autophosphorylation. May interact (phosphorylated) with HSP90AB1; maintains kinase activity. Interacts with NPHP1. Interacts with SNX9 (via SH3 domain). Interacts with SRC (via SH2 and SH3 domain). Interacts with EGFR, and this interaction is dependent on EGF stimulation and kinase activity of EGFR. Interacts (via kinase domain) with AKT1. Part of a collagen stimulated complex involved in cell migration composed of CDC42, CRK, TNK2 and BCAR1/p130cas. Interacts with BCAR1/p130cas via SH3 domains. Forms complexes with GRB2 and numerous receptor tyrosine kinases (RTK) including LTK, AXL or PDGFRL, in which GRB2 promotes RTK recruitment by TNK2. It depends on Mg(2+) as a cofactor. Post-translationally, autophosphorylation regulates kinase activity. Phosphorylation on Tyr-518 is required for interaction with SRC and is observed during association with clathrin-coated pits. Polyubiquitinated by NEDD4 and NEDD4L. Degradation can be induced by EGF and is lysosome-dependent. In terms of tissue distribution, the Tyr-284 phosphorylated form shows a significant increase in expression in breast cancers during the progressive stages i.e. normal to hyperplasia (ADH), ductal carcinoma in situ (DCIS), invasive ductal carcinoma (IDC) and lymph node metastatic (LNMM) stages. It also shows a significant increase in expression in prostate cancers during the progressive stages.

The protein resides in the cell membrane. Its subcellular location is the nucleus. It is found in the endosome. The protein localises to the cell junction. It localises to the adherens junction. The protein resides in the cytoplasmic vesicle membrane. Its subcellular location is the cytoplasmic vesicle. It is found in the clathrin-coated vesicle. The protein localises to the membrane. It localises to the clathrin-coated pit. The protein resides in the cytoplasm. Its subcellular location is the perinuclear region. It is found in the cytosol. It carries out the reaction L-tyrosyl-[protein] + ATP = O-phospho-L-tyrosyl-[protein] + ADP + H(+). It catalyses the reaction L-seryl-[protein] + ATP = O-phospho-L-seryl-[protein] + ADP + H(+). The enzyme catalyses L-threonyl-[protein] + ATP = O-phospho-L-threonyl-[protein] + ADP + H(+). With respect to regulation, inhibited by AIM-100 (4-amino-5,6-biaryl-furo[2,3-d]pyrimidine), which suppresses activating phosphorylation at Tyr-284. Repressed by dasatinib. Its function is as follows. Non-receptor tyrosine-protein and serine/threonine-protein kinase that is implicated in cell spreading and migration, cell survival, cell growth and proliferation. Transduces extracellular signals to cytosolic and nuclear effectors. Phosphorylates AKT1, AR, MCF2, WASL and WWOX. Implicated in trafficking and clathrin-mediated endocytosis through binding to epidermal growth factor receptor (EGFR) and clathrin. Binds to both poly- and mono-ubiquitin and regulates ligand-induced degradation of EGFR, thereby contributing to the accumulation of EGFR at the limiting membrane of early endosomes. Downstream effector of CDC42 which mediates CDC42-dependent cell migration via phosphorylation of BCAR1. May be involved both in adult synaptic function and plasticity and in brain development. Activates AKT1 by phosphorylating it on 'Tyr-176'. Phosphorylates AR on 'Tyr-267' and 'Tyr-363' thereby promoting its recruitment to androgen-responsive enhancers (AREs). Phosphorylates WWOX on 'Tyr-287'. Phosphorylates MCF2, thereby enhancing its activity as a guanine nucleotide exchange factor (GEF) toward Rho family proteins. Contributes to the control of AXL receptor levels. Confers metastatic properties on cancer cells and promotes tumor growth by negatively regulating tumor suppressor such as WWOX and positively regulating pro-survival factors such as AKT1 and AR. Phosphorylates WASP. The chain is Activated CDC42 kinase 1 (TNK2) from Homo sapiens (Human).